The sequence spans 167 residues: Bacterial non-heme ferritin (167 aa).

A Ferritin-like diiron domain is found at 1 to 145 (MLSKDIIKLL…DILDKIELIG (145 aa)). 5 residues coordinate Fe cation: E17, E50, H53, E94, and Q127.

It belongs to the ferritin family. Prokaryotic subfamily. Homooligomer of 24 subunits that assemble into a spherical protein shell (12 +/- 1 nM diameter) that can sequester at least 2000 iron atoms.

The protein localises to the cytoplasm. The catalysed reaction is 4 Fe(2+) + O2 + 6 H2O = 4 iron(III) oxide-hydroxide + 12 H(+). In terms of biological role, iron-storage protein. The polypeptide is Bacterial non-heme ferritin (ftnA) (Helicobacter pylori (strain ATCC 700392 / 26695) (Campylobacter pylori)).